Reading from the N-terminus, the 275-residue chain is Membrane protein insertase MisCB (275 aa).

The signal sequence occupies residues 1–18 (MLKTYQKLLAMGIFLIVL). Cys19 is lipidated: N-palmitoyl cysteine. Residue Cys19 is the site of S-diacylglycerol cysteine attachment. 5 helical membrane passes run 63–83 (YGLSIILVTIIVRIVVLPLFV), 139–159 (AMGCLPMLIQSPIMIGLYYAI), 172–192 (WFSLGQSDILMSLSAGIMYFV), 219–239 (LMVFIFPVMMTIFSLNVPAAL), and 240–260 (PLYWFTSGLFLTVQNIVLQMT).

Belongs to the OXA1/ALB3/YidC family. Type 2 subfamily. As to quaternary structure, mostly monomeric, it may also form dimers. Interacts with SpoIIIAE. Forms a complex with the F(1)F(0) ATP synthase in which can be found the alpha, beta, gamma, delta and epsilon subunits of F(1) and a, b and subunits of F(0). YqgA is found in the same complex.

The protein localises to the cell membrane. In terms of biological role, required for the insertion and/or proper folding and/or complex formation of integral membrane proteins into the membrane. Involved in integration of membrane proteins that insert both dependently and independently of the Sec translocase complex, as well as at least some lipoproteins. Also involved in protein secretion processes. It has an overlapping, although partly distinct, function compared to SpoIIIJ(MisCB). This is Membrane protein insertase MisCB (misCB) from Bacillus subtilis (strain 168).